The sequence spans 118 residues: uncharacterized protein (118 aa).

The chain crosses the membrane as a helical span at residues 21 to 38; it reads IVYFFFFFGLETFFSIIN.

The protein localises to the membrane. This is an uncharacterized protein from Dictyostelium discoideum (Social amoeba).